The chain runs to 449 residues: Tubulin beta chain (449 aa).

GTP-binding residues include Gln11, Glu69, Ser138, Gly142, Thr143, Gly144, Asn204, and Asn226. Glu69 provides a ligand contact to Mg(2+). Positions 426–449 (QDATAEEEGEFDEEEGVMDAEGAA) are disordered. Positions 429–443 (TAEEEGEFDEEEGVM) are enriched in acidic residues.

The protein belongs to the tubulin family. Dimer of alpha and beta chains. A typical microtubule is a hollow water-filled tube with an outer diameter of 25 nm and an inner diameter of 15 nM. Alpha-beta heterodimers associate head-to-tail to form protofilaments running lengthwise along the microtubule wall with the beta-tubulin subunit facing the microtubule plus end conferring a structural polarity. Microtubules usually have 13 protofilaments but different protofilament numbers can be found in some organisms and specialized cells. Requires Mg(2+) as cofactor.

It localises to the cytoplasm. Its subcellular location is the cytoskeleton. In terms of biological role, tubulin is the major constituent of microtubules, a cylinder consisting of laterally associated linear protofilaments composed of alpha- and beta-tubulin heterodimers. Microtubules grow by the addition of GTP-tubulin dimers to the microtubule end, where a stabilizing cap forms. Below the cap, tubulin dimers are in GDP-bound state, owing to GTPase activity of alpha-tubulin. The polypeptide is Tubulin beta chain (Eimeria tenella (Coccidian parasite)).